A 222-amino-acid polypeptide reads, in one-letter code: Probable RNA 2'-phosphotransferase (222 aa).

This sequence belongs to the KptA/TPT1 family.

Functionally, removes the 2'-phosphate from RNA via an intermediate in which the phosphate is ADP-ribosylated by NAD followed by a presumed transesterification to release the RNA and generate ADP-ribose 1''-2''-cyclic phosphate (APPR&gt;P). May function as an ADP-ribosylase. The sequence is that of Probable RNA 2'-phosphotransferase from Haloarcula marismortui (strain ATCC 43049 / DSM 3752 / JCM 8966 / VKM B-1809) (Halobacterium marismortui).